The following is a 319-amino-acid chain: Probable secreted beta-glucosidase C2G2.17c (319 aa).

The N-terminal stretch at 1–19 (MLFNNFLCFAVSAIPLVSA) is a signal peptide. N-linked (GlcNAc...) asparagine glycans are attached at residues Asn36, Asn39, Asn45, Asn48, and Asn221.

It belongs to the SUN family.

It is found in the secreted. In terms of biological role, cell surface beta-glucosidase involved in cell wall biogenesis. The sequence is that of Probable secreted beta-glucosidase C2G2.17c from Schizosaccharomyces pombe (strain 972 / ATCC 24843) (Fission yeast).